A 721-amino-acid polypeptide reads, in one-letter code: MTQQNAHSEGKCPVMHGSMTTNNRTEKNWWPKSLNLDILHQHDAKTNPMPSDFDYQEEVKKLDFSALKQDLIALMTDSQEWWPADWGHYGGLMIRMSWHAAGTYRIADGRGGAGTGNLRFAPLNSWPDNANLDKARRILWPIKKKYGNQLSWADLIAYAGTMAYESMGLKTFGFGFGREDIWHPEKDIYWGSEKEWLAPTNNPNSRYSGERDLENPLAAVMMGLIYVNPEGVDGQPDPLKTAHDVRVTFARMAMNDEETVALTAGGHTVGKAHGNGDAANLGPEPEGADIHDQGLGWLNKTTRGVGNNAVTSGIEGAWTSQPTQWDNGYFHLLLNYDWELKKSPAGAWQWEPIDIKEEDKPVDPENPNVRHNPIMTDADMAMKMDPEYRKISERFHSDPAYFADTFARAWFKLTHRDMGPKARYIGPDVPQEDLIWQDPVPNGNANYDIDAVKAKIAASGLSVSDMVTTAWDSARTFRQSDKRGGANGARVRLAPQKDWQGNEPERLARVLPVLENIAKDTGASVADVVVLAGNVGIEQAASAAGVNVTVPFLPGRGDATQEMTDVESFEVLEPLHDGYRNWLKQNYVVTPEEMLLDRTQLMGLTAAEMTVLVGGMRVLGTNHGGSKHGVFTDRVGQLTNDFFINLTDMKYTWEPVGENLYEIRSRRSKDVKWTATRVDLVFGSNSILRAYAELYAQDDNAGKFVEDFVAAWTKVMNADRF.

Positions 98–226 (WHAAGTYRIA…LAAVMMGLIY (129 aa)) form a cross-link, tryptophyl-tyrosyl-methioninium (Trp-Tyr) (with M-252). Catalysis depends on H99, which acts as the Proton acceptor. The segment at residues 226 to 252 (YVNPEGVDGQPDPLKTAHDVRVTFARM) is a cross-link (tryptophyl-tyrosyl-methioninium (Tyr-Met) (with W-98)). H267 contributes to the heme b binding site.

The protein belongs to the peroxidase family. Peroxidase/catalase subfamily. As to quaternary structure, homodimer or homotetramer. Heme b serves as cofactor. In terms of processing, formation of the three residue Trp-Tyr-Met cross-link is important for the catalase, but not the peroxidase activity of the enzyme.

The catalysed reaction is H2O2 + AH2 = A + 2 H2O. It catalyses the reaction 2 H2O2 = O2 + 2 H2O. In terms of biological role, bifunctional enzyme with both catalase and broad-spectrum peroxidase activity. The protein is Catalase-peroxidase 1 of Vibrio parahaemolyticus serotype O3:K6 (strain RIMD 2210633).